The following is a 331-amino-acid chain: E3 ubiquitin-protein ligase Siah2 (331 aa).

Residues 1–26 form a disordered region; it reads MSRPSSAGGAAGGLGAGKAGGSKHGG. The span at 9–26 shows a compositional bias: gly residues; it reads GAAGGLGAGKAGGSKHGG. The segment at 89 to 124 adopts an RING-type zinc-finger fold; sequence CPVCFDYVLPPILQCQAGHLVCNQCRQKLSCCPTCR. The SBD stretch occupies residues 139–331; sequence VASTLPFPCK…LGINVTISMC (193 aa). The SIAH-type zinc finger occupies 142 to 202; that stretch reads TLPFPCKYSS…VMPHLMHAHK (61 aa). Zn(2+) contacts are provided by C147, C154, H166, C170, C177, C184, H196, and H201.

This sequence belongs to the SINA (Seven in absentia) family. Homodimer. As to expression, in embryos it is expressed in all blastomeres starting at the mid-blastulla. After 20 somite stage, it is expressed mainly in the posterior part. Expressed in brain, including the eye, the cranial cavity, otic vesicle, optic chiasm and in the gut.

The enzyme catalyses S-ubiquitinyl-[E2 ubiquitin-conjugating enzyme]-L-cysteine + [acceptor protein]-L-lysine = [E2 ubiquitin-conjugating enzyme]-L-cysteine + N(6)-ubiquitinyl-[acceptor protein]-L-lysine.. The protein operates within protein modification; protein ubiquitination. Functionally, E3 ubiquitin-protein ligase that mediates ubiquitination and subsequent proteasomal degradation of target proteins. E3 ubiquitin ligases accept ubiquitin from an E2 ubiquitin-conjugating enzyme in the form of a thioester and then directly transfers the ubiquitin to targeted substrates. It probably triggers the ubiquitin-mediated degradation of different substrates. Induces cellular growth arrest by inhibiting the G2/M transition. May play a role in the regulation of the cellular clock function. The polypeptide is E3 ubiquitin-protein ligase Siah2 (siah2l) (Danio rerio (Zebrafish)).